The chain runs to 231 residues: 2-C-methyl-D-erythritol 4-phosphate cytidylyltransferase (231 aa).

The protein belongs to the IspD/TarI cytidylyltransferase family. IspD subfamily.

The enzyme catalyses 2-C-methyl-D-erythritol 4-phosphate + CTP + H(+) = 4-CDP-2-C-methyl-D-erythritol + diphosphate. It participates in isoprenoid biosynthesis; isopentenyl diphosphate biosynthesis via DXP pathway; isopentenyl diphosphate from 1-deoxy-D-xylulose 5-phosphate: step 2/6. Catalyzes the formation of 4-diphosphocytidyl-2-C-methyl-D-erythritol from CTP and 2-C-methyl-D-erythritol 4-phosphate (MEP). The chain is 2-C-methyl-D-erythritol 4-phosphate cytidylyltransferase from Shewanella pealeana (strain ATCC 700345 / ANG-SQ1).